The following is a 325-amino-acid chain: Neural proliferation differentiation and control protein 1 (325 aa).

Positions 1 to 34 (MATPLPPPSPRHLRLLRLLLSGLVLGAALRGAAA) are cleaved as a signal peptide. The interval 138-175 (QGLELGLPSTPGTPTPTPHTSLGSPVSSDPVHMSPLEP) is disordered. The helical transmembrane segment at 182-202 (GLALVLILAFCVAGAAALSVA) threads the bilayer. The residue at position 229 (Ser229) is a Phosphoserine. Residues 266–290 (EPPKELDTASSDEENEDGDFTVYEC) are disordered. Positions 275 to 284 (SSDEENEDGD) are enriched in acidic residues.

It belongs to the NPDC1/cab-1 family. Strongly expressed in adult brain; especially in hippocampus, frontal lobe and temporal lobe.

It is found in the membrane. In terms of biological role, suppresses oncogenic transformation in neural and non-neural cells and down-regulates neural cell proliferation. Might be involved in transcriptional regulation. The sequence is that of Neural proliferation differentiation and control protein 1 (NPDC1) from Homo sapiens (Human).